Here is a 497-residue protein sequence, read N- to C-terminus: Zinc finger protein ZIC 2-B (497 aa).

Disordered regions lie at residues 58-107 and 143-180; these read HMGA…TSQA and SAAAGGGQHGLFGPPAGSLHHHPHHHHQLSHGEHPQGH. Gly residues predominate over residues 66–88; the sequence is PGGGSGGGSGGGGGAGPNGGAGA. Positions 97–107 are enriched in polar residues; that stretch reads PGQTSAFTSQA. Basic residues predominate over residues 161–171; sequence LHHHPHHHHQL. The C2H2-type 1; atypical zinc-finger motif lies at 273–308; it reads LICKWIDPEQLNNPKKSCNKTFSTMHELVTHMSVEH. The segment at 317–344 adopts a C2H2-type 2; atypical zinc-finger fold; sequence HICFWEECAREGKPFKAKYKLVNHIRVH. 3 C2H2-type zinc fingers span residues 350-374, 380-404, and 410-432; these read FPCPFPGCGKVFARSENLKIHKRTH, FQCEFEGCDRRFANSSDRKKHMHVH, and YLCKMCDKSYTHPSSLRKHMKVH. The interval 423–473 is disordered; the sequence is SSLRKHMKVHESSPQGSESSPAASSGYESSTPPGLVSPNSETQNPNLSPAA. Positions 434–452 are enriched in low complexity; sequence SSPQGSESSPAASSGYESS. Residues 459–469 show a composition bias toward polar residues; sequence SPNSETQNPNL.

This sequence belongs to the GLI C2H2-type zinc-finger protein family.

Its subcellular location is the nucleus. It is found in the cytoplasm. Its function is as follows. Transcriptional repressor that inhibits neurogenesis and induces neural and neural crest differentiation. Regulates anteroposterior patterning in early development by inhibiting expression of the nodal genes through the inhibition of vegt. Required for gastrulation movements and for proper anterior neural and axial development. May also act as a transcriptional activator. May bind to the minimal GLI-consensus sequence 5'-TGGGTGGTC-3'. The protein is Zinc finger protein ZIC 2-B (zic2-b) of Xenopus laevis (African clawed frog).